The sequence spans 421 residues: MSKTHLTEQKFSDFALHPKVVEALEKKGFHNCTPIQALALPLTLAGRDVAGQAQTGTGKTMAFLTSTFHYLLSHPAIADRKVNQPRALIMAPTRELAVQIHADAEPLAQATGLKLGLAYGGDGYDKQLKVLESGVDILIGTTGRLIDYAKQNHINLGAIQVVVLDEADRMYDLGFIKDIRWLFRRMPPANQRLNMLFSATLSYRVRELAFEQMNNAEYIEVEPEQKTGHRIKEELFYPSNEEKMRLLQTLIEEEWPDRAIIFANTKHRCEEIWGHLAADGHRVGLLTGDVAQKKRLRILDEFTRGDLDILVATDVAARGLHIPAVTHVFNYDLPDDCEDYVHRIGRTGRAGASGHSISLACEEYALNLPAIETYIGHSIPVSKYNPDALMTDLPKPLRLTRPRTGNGPRRTGTPRNRRRSG.

The Q motif signature appears at 9–37 (QKFSDFALHPKVVEALEKKGFHNCTPIQA). The region spanning 40 to 219 (LPLTLAGRDV…FEQMNNAEYI (180 aa)) is the Helicase ATP-binding domain. Position 53–60 (53–60 (AQTGTGKT)) interacts with ATP. The DEAD box signature appears at 165–168 (DEAD). The Helicase C-terminal domain maps to 245-390 (RLLQTLIEEE…VSKYNPDALM (146 aa)). A disordered region spans residues 392–421 (DLPKPLRLTRPRTGNGPRRTGTPRNRRRSG). Over residues 402 to 414 (PRTGNGPRRTGTP) the composition is skewed to low complexity.

The protein belongs to the DEAD box helicase family. RhlB subfamily. In terms of assembly, component of the RNA degradosome, which is a multiprotein complex involved in RNA processing and mRNA degradation.

The protein localises to the cytoplasm. It catalyses the reaction ATP + H2O = ADP + phosphate + H(+). In terms of biological role, DEAD-box RNA helicase involved in RNA degradation. Has RNA-dependent ATPase activity and unwinds double-stranded RNA. This Escherichia coli O7:K1 (strain IAI39 / ExPEC) protein is ATP-dependent RNA helicase RhlB.